The primary structure comprises 348 residues: Histidinol-phosphate aminotransferase (348 aa).

K210 carries the post-translational modification N6-(pyridoxal phosphate)lysine.

It belongs to the class-II pyridoxal-phosphate-dependent aminotransferase family. Histidinol-phosphate aminotransferase subfamily. Homodimer. It depends on pyridoxal 5'-phosphate as a cofactor.

The catalysed reaction is L-histidinol phosphate + 2-oxoglutarate = 3-(imidazol-4-yl)-2-oxopropyl phosphate + L-glutamate. Its pathway is amino-acid biosynthesis; L-histidine biosynthesis; L-histidine from 5-phospho-alpha-D-ribose 1-diphosphate: step 7/9. The sequence is that of Histidinol-phosphate aminotransferase from Pseudomonas putida (strain ATCC 700007 / DSM 6899 / JCM 31910 / BCRC 17059 / LMG 24140 / F1).